A 379-amino-acid polypeptide reads, in one-letter code: Succinyl-diaminopimelate desuccinylase (379 aa).

His-70 provides a ligand contact to Zn(2+). Asp-72 is a catalytic residue. Residue Asp-103 coordinates Zn(2+). Glu-137 serves as the catalytic Proton acceptor. Residues Glu-138, Glu-166, and His-352 each contribute to the Zn(2+) site.

Belongs to the peptidase M20A family. DapE subfamily. Homodimer. Requires Zn(2+) as cofactor. Co(2+) serves as cofactor.

The catalysed reaction is N-succinyl-(2S,6S)-2,6-diaminopimelate + H2O = (2S,6S)-2,6-diaminopimelate + succinate. It participates in amino-acid biosynthesis; L-lysine biosynthesis via DAP pathway; LL-2,6-diaminopimelate from (S)-tetrahydrodipicolinate (succinylase route): step 3/3. Its function is as follows. Catalyzes the hydrolysis of N-succinyl-L,L-diaminopimelic acid (SDAP), forming succinate and LL-2,6-diaminopimelate (DAP), an intermediate involved in the bacterial biosynthesis of lysine and meso-diaminopimelic acid, an essential component of bacterial cell walls. This is Succinyl-diaminopimelate desuccinylase from Burkholderia vietnamiensis (strain G4 / LMG 22486) (Burkholderia cepacia (strain R1808)).